Here is a 267-residue protein sequence, read N- to C-terminus: Membrane-associated protein Vipp1 (267 aa).

Positions 26–156 (EKVLEQAVID…KANAELQQTL (131 aa)) form a coiled coil. The disordered stretch occupies residues 224 to 252 (GTSAATPQLEAAPVDSSVPANNASQDDAV).

The protein belongs to the PspA/Vipp/IM30 family.

Its subcellular location is the cell inner membrane. In terms of biological role, required for thylakoid formation. The sequence is that of Membrane-associated protein Vipp1 from Synechocystis sp. (strain ATCC 27184 / PCC 6803 / Kazusa).